The primary structure comprises 165 residues: Endoribonuclease YbeY (165 aa).

Histidine 130, histidine 134, and histidine 140 together coordinate Zn(2+).

This sequence belongs to the endoribonuclease YbeY family. It depends on Zn(2+) as a cofactor.

It is found in the cytoplasm. Functionally, single strand-specific metallo-endoribonuclease involved in late-stage 70S ribosome quality control and in maturation of the 3' terminus of the 16S rRNA. The chain is Endoribonuclease YbeY from Streptococcus agalactiae serotype Ia (strain ATCC 27591 / A909 / CDC SS700).